The chain runs to 727 residues: Polyribonucleotide nucleotidyltransferase (727 aa).

Mg(2+) contacts are provided by D488 and D494. The KH domain occupies 555 to 614; sequence PKLYTMKINPEKIRDVIGKGGATIRALTDETGCQINIEEDGTITIAATEAAKADEAKRRI. The S1 motif domain maps to 624–692; that stretch reads GKIYEGPVTK…DKGRVKLSMK (69 aa). Positions 691–727 are disordered; the sequence is MKALADRPAGDSGRPAPAERGERRERRDGGASEQQQQ. The segment covering 707-720 has biased composition (basic and acidic residues); it reads PAERGERRERRDGG.

This sequence belongs to the polyribonucleotide nucleotidyltransferase family. Mg(2+) serves as cofactor.

Its subcellular location is the cytoplasm. The enzyme catalyses RNA(n+1) + phosphate = RNA(n) + a ribonucleoside 5'-diphosphate. In terms of biological role, involved in mRNA degradation. Catalyzes the phosphorolysis of single-stranded polyribonucleotides processively in the 3'- to 5'-direction. In Acidovorax sp. (strain JS42), this protein is Polyribonucleotide nucleotidyltransferase.